Reading from the N-terminus, the 286-residue chain is Merozoite surface protein 2 (286 aa).

An N-terminal signal peptide occupies residues 1–20; the sequence is MKVIKTLSIINFFIFVTFNI. 2 N-linked (GlcNAc...) asparagine glycosylation sites follow: Asn22 and Asn36. The tract at residues 43 to 248 is disordered; that stretch reads MTESKTPTPT…SQKECTDGNK (206 aa). The interval 44 to 212 is polymorphic region; that stretch reads TESKTPTPTG…EQTESPELQS (169 aa). The span at 54–68 shows a compositional bias: gly residues; sequence AGAGASGSAGSGDGA. The stretch at 59–68 is repeat 1; it reads SGSAGSGDGA. The segment at 59-106 is 5 X 10 AA tandem repeats of S-G-S-A-[GS]-[GS]-[AD]-G-A; sequence SGSAGSGDGASGSASGSASGSASGSAGASGSASGSAGASGSASGSAGA. The 2; partial repeat unit spans residues 69–76; the sequence is SGSASGSA. Positions 69–137 are enriched in low complexity; sequence SGSASGSASG…STSTSSENPN (69 aa). Repeat copies occupy residues 77–86, 88–96, and 97–106. Polar residues-rich tracts occupy residues 153-179 and 186-214; these read KPNQANKETQNNSNVQQDSQTKSNVPP and KSPTAQPEQAENSAPTAEQTESPELQSAP. The N-linked (GlcNAc...) asparagine glycan is linked to Asn163. Asn235 carries N-linked (GlcNAc...) asparagine glycosylation. The segment covering 239-248 has biased composition (basic and acidic residues); it reads SQKECTDGNK. An intrachain disulfide couples Cys243 to Cys251. N-linked (GlcNAc...) asparagine glycosylation is found at Asn259 and Asn260. Asn260 carries GPI-anchor amidated asparagine lipidation. Residues 261 to 286 constitute a propeptide, removed in mature form; it reads SSNIASINKFVVLISATLVLSFAIFI.

It localises to the cell membrane. In terms of biological role, may play a role in the merozoite attachment to the erythrocyte. The protein is Merozoite surface protein 2 of Plasmodium falciparum (isolate 311).